A 262-amino-acid polypeptide reads, in one-letter code: Small ribosomal subunit protein eS4 (262 aa).

An S4 RNA-binding domain is found at 42–105 (LPLVVFLRNR…NEHFRLVYDV (64 aa)). A KOW domain is found at 178-211 (GRLVMVTGGRNLGRVGVIVHREKHEGGFDLVHIK).

Belongs to the eukaryotic ribosomal protein eS4 family. In terms of assembly, component of the small ribosomal subunit. Mature ribosomes consist of a small (40S) and a large (60S) subunit. The 40S subunit contains about 32 different proteins and 1 molecule of RNA (18S). The 60S subunit contains 45 different proteins and 3 molecules of RNA (25S, 5.8S and 5S).

It is found in the cytoplasm. Functionally, component of the ribosome, a large ribonucleoprotein complex responsible for the synthesis of proteins in the cell. The small ribosomal subunit (SSU) binds messenger RNAs (mRNAs) and translates the encoded message by selecting cognate aminoacyl-transfer RNA (tRNA) molecules. The large subunit (LSU) contains the ribosomal catalytic site termed the peptidyl transferase center (PTC), which catalyzes the formation of peptide bonds, thereby polymerizing the amino acids delivered by tRNAs into a polypeptide chain. The nascent polypeptides leave the ribosome through a tunnel in the LSU and interact with protein factors that function in enzymatic processing, targeting, and the membrane insertion of nascent chains at the exit of the ribosomal tunnel. This Candida albicans (strain SC5314 / ATCC MYA-2876) (Yeast) protein is Small ribosomal subunit protein eS4 (RPS42).